The chain runs to 341 residues: tRNA N6-adenosine threonylcarbamoyltransferase (341 aa).

His113 and His117 together coordinate Fe cation. Residues 136-140, Asp169, Gly182, and Asn280 contribute to the substrate site; that span reads IISGG. Asp308 is a binding site for Fe cation.

It belongs to the KAE1 / TsaD family. Fe(2+) serves as cofactor.

The protein resides in the cytoplasm. The enzyme catalyses L-threonylcarbamoyladenylate + adenosine(37) in tRNA = N(6)-L-threonylcarbamoyladenosine(37) in tRNA + AMP + H(+). In terms of biological role, required for the formation of a threonylcarbamoyl group on adenosine at position 37 (t(6)A37) in tRNAs that read codons beginning with adenine. Is involved in the transfer of the threonylcarbamoyl moiety of threonylcarbamoyl-AMP (TC-AMP) to the N6 group of A37, together with TsaE and TsaB. TsaD likely plays a direct catalytic role in this reaction. This Anaplasma marginale (strain St. Maries) protein is tRNA N6-adenosine threonylcarbamoyltransferase.